Consider the following 307-residue polypeptide: Small ribosomal subunit biogenesis GTPase RsgA (307 aa).

The region spanning 82–240 is the CP-type G domain; sequence GRYGERIVVA…IADTPGLREV (159 aa). Residues 131 to 134 and 182 to 190 contribute to the GTP site; these read NKAD and GPSGVGKSS. Residues Cys-264, Cys-269, His-271, and Cys-277 each coordinate Zn(2+).

The protein belongs to the TRAFAC class YlqF/YawG GTPase family. RsgA subfamily. Monomer. Associates with 30S ribosomal subunit, binds 16S rRNA. It depends on Zn(2+) as a cofactor.

Its subcellular location is the cytoplasm. In terms of biological role, one of several proteins that assist in the late maturation steps of the functional core of the 30S ribosomal subunit. Helps release RbfA from mature subunits. May play a role in the assembly of ribosomal proteins into the subunit. Circularly permuted GTPase that catalyzes slow GTP hydrolysis, GTPase activity is stimulated by the 30S ribosomal subunit. In Gemmatimonas aurantiaca (strain DSM 14586 / JCM 11422 / NBRC 100505 / T-27), this protein is Small ribosomal subunit biogenesis GTPase RsgA.